A 597-amino-acid chain; its full sequence is Probable serine/threonine-protein kinase DDB_G0281745 (597 aa).

Polar residues predominate over residues 49 to 61 (TIDNSNGKQSTTP). The disordered stretch occupies residues 49–320 (TIDNSNGKQS…RNNESTATTA (272 aa)). Positions 72–97 (QPPPQQSQQQPPQPLKPIPATRPVPT) are enriched in pro residues. The span at 114–140 (TLPTTNSSTKYSTLPSRQFFEVSSSPG) shows a compositional bias: polar residues. Low complexity predominate over residues 157–168 (SLSSNQNGSNLN). A compositionally biased stretch (pro residues) spans 208 to 234 (PSPPSPPLQSPQPTPQQQPPPLKPIPQ). Over residues 235–264 (PQQQQQQQQQQQQQQQQQQQQQQQQQQQQQ) the composition is skewed to low complexity. A compositionally biased stretch (pro residues) spans 265 to 274 (QPPPLKPIPQ). Residues 275 to 301 (PQQSQPTQPIKSQIQIPITNTNGNTNG) are compositionally biased toward low complexity. A Protein kinase domain is found at 334-585 (KFVGNEIGSG…KVLDTIQNIY (252 aa)). Residues 340–348 (IGSGKYGSV) and K361 each bind ATP. D454 serves as the catalytic Proton acceptor.

This sequence belongs to the protein kinase superfamily. TKL Ser/Thr protein kinase family.

The catalysed reaction is L-seryl-[protein] + ATP = O-phospho-L-seryl-[protein] + ADP + H(+). It catalyses the reaction L-threonyl-[protein] + ATP = O-phospho-L-threonyl-[protein] + ADP + H(+). The polypeptide is Probable serine/threonine-protein kinase DDB_G0281745 (Dictyostelium discoideum (Social amoeba)).